Here is a 397-residue protein sequence, read N- to C-terminus: DnaJ homolog subfamily A member 1 (397 aa).

A J domain is found at 6–68; the sequence is TYYDVLGVKP…KKRELYDKGG (63 aa). An N6-acetyllysine modification is found at K66. At S83 the chain carries Phosphoserine. Residues 121-205 form a CR-type zinc finger; that stretch reads GATRKLALQK…CNGRKIVREK (85 aa). 8 residues coordinate Zn(2+): C134, C137, C150, C153, C177, C180, C193, and C196. CXXCXGXG motif repeat units lie at residues 134 to 141, 150 to 157, 177 to 184, and 193 to 200; these read CDKCEGRG, CPNCRGTG, CMECQGHG, and CKSCNGRK. Residue S335 is modified to Phosphoserine. Positions 352 to 397 are disordered; that stretch reads VEETDEMDQVELVDFDPNQERRRHYNGEAYEDDEHHPRGGVQCQTS. A compositionally biased stretch (acidic residues) spans 353 to 365; it reads EETDEMDQVELVD. Phosphotyrosine is present on Y381. C394 carries the cysteine methyl ester modification. C394 carries S-farnesyl cysteine lipidation. A propeptide spans 395 to 397 (removed in mature form); the sequence is QTS.

Identified in a complex with HSPA1B and BAX. Interacts with RNF207.

It is found in the membrane. Its subcellular location is the cytoplasm. The protein localises to the microsome. It localises to the mitochondrion. The protein resides in the nucleus. It is found in the perinuclear region. Functionally, co-chaperone for HSPA8/Hsc70. Plays a role in protein transport into mitochondria via its role as co-chaperone. Functions as co-chaperone for HSPA1B and negatively regulates the translocation of BAX from the cytosol to mitochondria in response to cellular stress, thereby protecting cells against apoptosis. Stimulates ATP hydrolysis, but not the folding of unfolded proteins mediated by HSPA1A (in vitro). Promotes apoptosis in response to cellular stress mediated by exposure to anisomycin or UV. The sequence is that of DnaJ homolog subfamily A member 1 (DNAJA1) from Chlorocebus aethiops (Green monkey).